A 443-amino-acid chain; its full sequence is Cobyrinate a,c-diamide synthase (443 aa).

Residues 248 to 433 (KIAVAYDKAF…LHNHAVANPY (186 aa)) form the GATase cobBQ-type domain. Cysteine 327 acts as the Nucleophile in catalysis.

This sequence belongs to the CobB/CbiA family. Mg(2+) is required as a cofactor.

The catalysed reaction is cob(II)yrinate + 2 L-glutamine + 2 ATP + 2 H2O = cob(II)yrinate a,c diamide + 2 L-glutamate + 2 ADP + 2 phosphate + 2 H(+). It carries out the reaction Ni-sirohydrochlorin + 2 L-glutamine + 2 ATP + 2 H2O = Ni-sirohydrochlorin a,c-diamide + 2 L-glutamate + 2 ADP + 2 phosphate + 2 H(+). It participates in cofactor biosynthesis; adenosylcobalamin biosynthesis; cob(II)yrinate a,c-diamide from sirohydrochlorin (anaerobic route): step 10/10. Catalyzes the ATP-dependent amidation of the two carboxylate groups at positions a and c of cobyrinate, using either L-glutamine or ammonia as the nitrogen source. Involved in the biosynthesis of the unique nickel-containing tetrapyrrole coenzyme F430, the prosthetic group of methyl-coenzyme M reductase (MCR), which plays a key role in methanogenesis and anaerobic methane oxidation. Catalyzes the ATP-dependent amidation of the two carboxylate groups at positions a and c of Ni-sirohydrochlorin, using L-glutamine or ammonia as the nitrogen source. The protein is Cobyrinate a,c-diamide synthase of Methanocaldococcus jannaschii (strain ATCC 43067 / DSM 2661 / JAL-1 / JCM 10045 / NBRC 100440) (Methanococcus jannaschii).